The following is a 280-amino-acid chain: 4-diphosphocytidyl-2-C-methyl-D-erythritol kinase (280 aa).

Residue Lys-8 is part of the active site. 91-101 (PVSAGLAGGST) lines the ATP pocket. Residue Asp-133 is part of the active site.

It belongs to the GHMP kinase family. IspE subfamily.

It catalyses the reaction 4-CDP-2-C-methyl-D-erythritol + ATP = 4-CDP-2-C-methyl-D-erythritol 2-phosphate + ADP + H(+). It functions in the pathway isoprenoid biosynthesis; isopentenyl diphosphate biosynthesis via DXP pathway; isopentenyl diphosphate from 1-deoxy-D-xylulose 5-phosphate: step 3/6. Catalyzes the phosphorylation of the position 2 hydroxy group of 4-diphosphocytidyl-2C-methyl-D-erythritol. The chain is 4-diphosphocytidyl-2-C-methyl-D-erythritol kinase from Clostridium botulinum (strain Eklund 17B / Type B).